The chain runs to 557 residues: MNNRLDNNRTIRAPHGDKISAKSWQTEAAKRMLMNNLDPDVAEHPHALVVYGGIGRAARDWPSYDKIIATLDRLEDDETLLVQSGKPVGVFKTHSNAPRVLIANSNLVPHWANWEHFNELDKKGLMMYGQMTAGSWIYIGSQGIVQGTYETFVAMAKQHFAGSAKGKWVLTGGLGGMGGAQPLAATMAGFCALVVECDETRIDFRIKTGYVDIKANNLEHALQLITNACVKGDALSVGLLGNAADVFSTLVKSGVTPDVVTDQTSAHDPLNGYLPQGWSMEHAAKMREQDPKAVVTAAKQSMAVQVRAMLALQQAGAATTDYGNNIRQMAFDEGVTNAFDFPGFVPAYIRPLFCEGIGPFRWVALSGDPEDIYKTDAKVKELIPDDAHLHNWLDMARKRIQFQGLPARICWVGLKDRARLALAFNNMVKNGELKAPVVIGRDHLDSGSVASPNRETEAMLDGSDAVSDWPLLNALLNTASGATWVSLHHGGGVGMGFSQHAGVVIVADGSDEAKQRIARVLWNDPATGVMRHADAGYDIAKNCAKEQNLDLPMLNEE.

NAD(+) is bound by residues 52–53, Gln130, 176–178, Glu196, Arg201, 242–243, 263–267, 273–274, and Tyr322; these read GG, GMG, NA, QTSAH, and YL. The active site involves Cys410. Gly492 contacts NAD(+).

The protein belongs to the urocanase family. Requires NAD(+) as cofactor.

It is found in the cytoplasm. The catalysed reaction is 4-imidazolone-5-propanoate = trans-urocanate + H2O. It functions in the pathway amino-acid degradation; L-histidine degradation into L-glutamate; N-formimidoyl-L-glutamate from L-histidine: step 2/3. In terms of biological role, catalyzes the conversion of urocanate to 4-imidazolone-5-propionate. This Pseudoalteromonas translucida (strain TAC 125) protein is Urocanate hydratase.